Reading from the N-terminus, the 159-residue chain is Transcriptional repressor NrdR (159 aa).

Positions 1 to 11 (MQCPSCQNTDS) are enriched in polar residues. Positions 1-20 (MQCPSCQNTDSRVLESRSAD) are disordered. The segment at 3–34 (CPSCQNTDSRVLESRSADSGRSVRRRRECLNC) is a zinc-finger region. Residues 49–139 (INVLKRSGAK…VYRQFNGIND (91 aa)) form the ATP-cone domain.

It belongs to the NrdR family. The cofactor is Zn(2+).

Negatively regulates transcription of bacterial ribonucleotide reductase nrd genes and operons by binding to NrdR-boxes. This Prochlorococcus marinus (strain NATL1A) protein is Transcriptional repressor NrdR.